The following is a 287-amino-acid chain: Beta-lactamase GES-1 (287 aa).

A signal peptide spans 1–18 (MRFIHALLLAGIAHSAYA). A disulfide bridge connects residues cysteine 63 and cysteine 233. Serine 64 serves as the catalytic Nucleophile; acyl-ester intermediate. A beta-lactam contacts are provided by lysine 67, serine 125, glutamate 161, and threonine 232.

It belongs to the class-A beta-lactamase family. Monomer. May form dimers.

The catalysed reaction is a beta-lactam + H2O = a substituted beta-amino acid. With respect to regulation, inhibited by the beta-lactamase-blocking agents clavulanic acid, tazobactam, sulbactam and tazobactam and the carbapenem, imipenem. Inhibition by imipenem may involve Gly-165. Extended-spectrum beta-lactamase (ESBL) which confers resistance to penicillins, as well as first, second, third and fourth-generation cephalosporins. Has ceftazidime-hydrolyzing activity. Inactive against the carbapenems, imipenem, meropenem, ertapenem and doripenem. However, weak hydrolytic activity with respect to imipenem has also been reported. This is Beta-lactamase GES-1 from Klebsiella pneumoniae.